A 149-amino-acid chain; its full sequence is FAD synthase (149 aa).

ATP contacts are provided by residues 9–10, 14–17, asparagine 92, and tyrosine 119; these read TF and HPGH.

This sequence belongs to the archaeal FAD synthase family. In terms of assembly, homodimer. Requires a divalent metal cation as cofactor.

The enzyme catalyses FMN + ATP + H(+) = FAD + diphosphate. It functions in the pathway cofactor biosynthesis; FAD biosynthesis; FAD from FMN: step 1/1. In terms of biological role, catalyzes the transfer of the AMP portion of ATP to flavin mononucleotide (FMN) to produce flavin adenine dinucleotide (FAD) coenzyme. The chain is FAD synthase from Methanoculleus marisnigri (strain ATCC 35101 / DSM 1498 / JR1).